The chain runs to 545 residues: Degenerin-like protein asic-2 (545 aa).

At 1-34 the chain is on the cytoplasmic side; that stretch reads MRGGGFVQIFKDFSNWSTVAVVPHVANANNKISR. The helical transmembrane segment at 35–55 threads the bilayer; sequence IFWIAIFLFVLGMFAYELYIL. At 56 to 457 the chain is on the extracellular side; sequence IAKFFSYPAT…NVINDLGGQA (402 aa). Cysteines 83 and 191 form a disulfide. Asn-201 is a glycosylation site (N-linked (GlcNAc...) asparagine). 5 disulfide bridges follow: Cys-284–Cys-370, Cys-305–Cys-366, Cys-309–Cys-364, Cys-318–Cys-343, and Cys-320–Cys-334. Asn-350 carries N-linked (GlcNAc...) asparagine glycosylation. Residues 458 to 478 form a helical membrane-spanning segment; sequence GLWLGLSVISVVEMTGLMLVM. Positions 462–464 match the GAS motif; ion selectivity filter motif; sequence GLS. Residues 479 to 545 lie on the Cytoplasmic side of the membrane; that stretch reads GAFCVTGGAI…NKGDEEKKKK (67 aa). Basic and acidic residues-rich tracts occupy residues 514 to 523 and 534 to 545; these read DHLEKKHGEM and IENKGDEEKKKK. The segment at 514-545 is disordered; sequence DHLEKKHGEMESGSDGEVDDIENKGDEEKKKK.

It belongs to the amiloride-sensitive sodium channel (TC 1.A.6) family. In terms of assembly, can form homotrimers. Heterotrimer; forms functional heterotrimers producing channel with different properties.

It is found in the cell membrane. The catalysed reaction is Na(+)(in) = Na(+)(out). Inhibited by the diuretic drug amiloride. Could form pH-gated heterotrimeric sodium channels that act as postsynaptic excitatory sensors in the nervous system, generating rapid, transient inward currents that fully desensitize upon extracellular acidification. This is Degenerin-like protein asic-2 (asic-2) from Caenorhabditis elegans.